The primary structure comprises 189 residues: S-protein homolog 26 (189 aa).

The signal sequence occupies residues 1-25; that stretch reads MISMNRLSILLFVFAFGLTMMSNTA.

This sequence belongs to the plant self-incompatibility (S1) protein family.

It localises to the secreted. This chain is S-protein homolog 26, found in Arabidopsis thaliana (Mouse-ear cress).